We begin with the raw amino-acid sequence, 548 residues long: MSGDTGPSKQGGTRYGSISSPPSPGPQQAPPGGTYLGEKIPIPDTESGAFSLRKLWAFTGPGFLMSIAFLDPGNIESDLQAGAVAGFKLLWVLLWATVLGLLCQRLAARLGVVTGKDLGEVCHLYYPKVPRILLWLTIELAIVGSDMQEVIGTAIAFSLLSAGRIPLWGGVLITVVDTFFFLFLDNYGLRKLEAFFGFLITIMALTFGYEYVVAQPAQGALLQGLFLPSCRGCGQPELLQAVGIIGAIIMPHNIYLHSSLVKSREVDRSRRADIREANMYFLIEATIALSVSFLINLFVMAVFGQAFYKQTNQAAFNICAKSSLHDYAPIFPRNNLTVAVDIYQGGVILGCLFGPAALYIWAVGLLAAGQSSTMTGTYAGQFVMEGFLKLRWSRFARVLLTRSCAILPTVLLAVFRDLRDLSGLNDLLNVLQSLLLPFAVLPILTFTSMPALMQEFANGLVSKVITSSIMVLVCAVNLYFVISYVPSLPHPAYFSLVALLAAAYLGLTTYLVWTCLITQGATFLAHNSHQRFLYGLPEEDQEKGRTSG.

A compositionally biased stretch (polar residues) spans 1–11 (MSGDTGPSKQG). The tract at residues 1–38 (MSGDTGPSKQGGTRYGSISSPPSPGPQQAPPGGTYLGE) is disordered. At 1-55 (MSGDTGPSKQGGTRYGSISSPPSPGPQQAPPGGTYLGEKIPIPDTESGAFSLRKL) the chain is on the cytoplasmic side. A helical transmembrane segment spans residues 56 to 73 (WAFTGPGFLMSIAFLDPG). Residues 74–82 (NIESDLQAG) are Extracellular-facing. Residues 83 to 102 (AVAGFKLLWVLLWATVLGLL) form a helical membrane-spanning segment. Residues 103–139 (CQRLAARLGVVTGKDLGEVCHLYYPKVPRILLWLTIE) are Cytoplasmic-facing. The chain crosses the membrane as a helical span at residues 140-160 (LAIVGSDMQEVIGTAIAFSLL). Residues 161–164 (SAGR) lie on the Extracellular side of the membrane. The chain crosses the membrane as a helical span at residues 165 to 184 (IPLWGGVLITVVDTFFFLFL). Over 185–193 (DNYGLRKLE) the chain is Cytoplasmic. A helical membrane pass occupies residues 194-214 (AFFGFLITIMALTFGYEYVVA). At 215–237 (QPAQGALLQGLFLPSCRGCGQPE) the chain is on the extracellular side. The chain crosses the membrane as a helical span at residues 238 to 256 (LLQAVGIIGAIIMPHNIYL). Residues 257–284 (HSSLVKSREVDRSRRADIREANMYFLIE) lie on the Cytoplasmic side of the membrane. A helical membrane pass occupies residues 285–304 (ATIALSVSFLINLFVMAVFG). At 305-346 (QAFYKQTNQAAFNICAKSSLHDYAPIFPRNNLTVAVDIYQGG) the chain is on the extracellular side. Asparagine 335 carries N-linked (GlcNAc...) asparagine glycosylation. The helical transmembrane segment at 347-366 (VILGCLFGPAALYIWAVGLL) threads the bilayer. At 367–397 (AAGQSSTMTGTYAGQFVMEGFLKLRWSRFAR) the chain is on the cytoplasmic side. Residues 398–415 (VLLTRSCAILPTVLLAVF) traverse the membrane as a helical segment. At 416–426 (RDLRDLSGLND) the chain is on the extracellular side. The helical transmembrane segment at 427-447 (LLNVLQSLLLPFAVLPILTFT) threads the bilayer. Topologically, residues 448 to 463 (SMPALMQEFANGLVSK) are cytoplasmic. A helical transmembrane segment spans residues 464–485 (VITSSIMVLVCAVNLYFVISYV). Residues 486-493 (PSLPHPAY) lie on the Extracellular side of the membrane. A helical membrane pass occupies residues 494 to 513 (FSLVALLAAAYLGLTTYLVW). Over 514 to 548 (TCLITQGATFLAHNSHQRFLYGLPEEDQEKGRTSG) the chain is Cytoplasmic.

This sequence belongs to the NRAMP family.

The protein resides in the late endosome membrane. It is found in the lysosome membrane. It carries out the reaction Zn(2+)(in) + H(+)(out) = Zn(2+)(out) + H(+)(in). The catalysed reaction is Fe(2+)(in) + H(+)(out) = Fe(2+)(out) + H(+)(in). It catalyses the reaction Mn(2+)(in) + H(+)(out) = Mn(2+)(out) + H(+)(in). Its function is as follows. Macrophage-specific antiporter that fluxes metal ions in either direction against a proton gradient. Localized to late endosomal lysosomal membranes, delivers bivalent cations from the cytosol into these acidic compartments where they may directly affect antimicrobial activity. Involved in iron metabolism and host natural resistance to infection with intracellular parasites. Pathogen resistance involves sequestration of Fe(2+) and Mn(2+), cofactors of both prokaryotic and eukaryotic catalases and superoxide dismutases, not only to protect the macrophage against its own generation of reactive oxygen species, but to deny the cations to the pathogen for synthesis of its protective enzymes. This chain is Natural resistance-associated macrophage protein 1 (SLC11A1), found in Bubalus bubalis (Domestic water buffalo).